The chain runs to 2208 residues: RNA-directed RNA polymerase L (2208 aa).

An endonuclease region spans residues 26–284 (KEALLSQVEV…SHAGTTVPEC (259 aa)). Positions 51, 89, and 102 each coordinate Mn(2+). Lys115 is an active-site residue. The region spanning 1172 to 1370 (CDMKMAVNNG…FLSSKLNKFV (199 aa)) is the RdRp catalytic domain. A Mg(2+)-binding site is contributed by Asp1330.

The protein belongs to the Bunyavirales RNA polymerase family. In terms of assembly, homomultimer; the oligomeric structure is essential for the polymerase activity. Interacts with nucleoprotein N. Interacts with protein Z; this interaction inhibits viral transcription and replication, Z partially blocks the product exit tunnel for the releasing nascent RNA product. It depends on Mn(2+) as a cofactor. Requires Mg(2+) as cofactor.

It is found in the virion. It localises to the host cytoplasm. It catalyses the reaction RNA(n) + a ribonucleoside 5'-triphosphate = RNA(n+1) + diphosphate. Functionally, RNA-dependent RNA polymerase, which is responsible for the replication and transcription of the viral RNA genome using antigenomic RNA as an intermediate. During transcription, synthesizes subgenomic RNAs and assures their capping by a cap-snatching mechanism, which involves the endonuclease activity cleaving the host capped pre-mRNAs. These short capped RNAs are then used as primers for viral transcription. The 3'-end of subgenomic mRNAs molecules are heterogeneous and not polyadenylated. The replicase function is to direct synthesis of antigenomic and genomic RNA which are encapsidated and non capped. As a consequence of the use of the same enzyme for both transcription and replication, these mechanisms need to be well coordinated. These processes may be regulated by proteins N and Z in a dose-dependent manner. Z protein inhibits the viral polymerase L und thus the viral transcription and RNA synthesis. The chain is RNA-directed RNA polymerase L from Hylaeamys megacephalus (Large-headed rice rat).